A 194-amino-acid chain; its full sequence is MSEQSTSANPQRRTFLMVLPLIAFIGLALLFWFRLGSGDPSRIPSALIGRPAPQTALPPLEGLQADNVQVPGLDPAAFKGKVSLVNVWASWCVPCHDEAPLLTELGKDKRFQLVGINYKDAADNARRFLGRYGNPFGRVGVDANGRASIEWGVYGVPETFVVGREGTIVYKLVGPITPDNLRSVLLPQMEKALK.

The N-terminal stretch at 1-37 is a signal peptide; the sequence is MSEQSTSANPQRRTFLMVLPLIAFIGLALLFWFRLGS. The region spanning 46–190 is the Thioredoxin domain; it reads ALIGRPAPQT…LRSVLLPQME (145 aa). An intrachain disulfide couples C92 to C95.

The protein belongs to the thioredoxin family. DsbE subfamily.

Its subcellular location is the periplasm. Its function is as follows. Required for disulfide bond formation in some periplasmic proteins. Also acts as a disulfide oxidoreductase in cytochromes c biogenesis. The cysteines of apocytochromes c must be in the reduced state for covalent linkage between the two moieties to occur. This is Thiol:disulfide interchange protein CycY (cycY) from Bradyrhizobium diazoefficiens (strain JCM 10833 / BCRC 13528 / IAM 13628 / NBRC 14792 / USDA 110).